The chain runs to 73 residues: Translation initiation factor IF-1 (73 aa).

Residues 1 to 73 (MANKEELIEF…SKGRITYRAR (73 aa)) enclose the S1-like domain.

Belongs to the IF-1 family. In terms of assembly, component of the 30S ribosomal translation pre-initiation complex which assembles on the 30S ribosome in the order IF-2 and IF-3, IF-1 and N-formylmethionyl-tRNA(fMet); mRNA recruitment can occur at any time during PIC assembly.

It localises to the cytoplasm. In terms of biological role, one of the essential components for the initiation of protein synthesis. Stabilizes the binding of IF-2 and IF-3 on the 30S subunit to which N-formylmethionyl-tRNA(fMet) subsequently binds. Helps modulate mRNA selection, yielding the 30S pre-initiation complex (PIC). Upon addition of the 50S ribosomal subunit IF-1, IF-2 and IF-3 are released leaving the mature 70S translation initiation complex. This chain is Translation initiation factor IF-1, found in Acinetobacter baylyi (strain ATCC 33305 / BD413 / ADP1).